The chain runs to 821 residues: MTRNAPPGQESTDLAWLVTPAKDLVENFSIDVLKALAGYLEVIRQESEDTDNQVDAATTYRLFDFQRACRIIQGSCAVYGRKVDHVYELTISVVDLVENKGQDDGNTGSRRGAGRRKNFNLGSTNYDLADIDSLKQEALANFEKTVKEEKKSIDAVRMVENAEVIESQYERKSCLVAKPTQFMFKLNYGQLNRTDEQILNAKSRPDVIGKVKDFEIKKSKVKHDQQILYSHDCYRGNLDQFTLPGARWMPDNKELAANFGVADLEVELDLEQEHEKISAYGPFKDPLSGREVVPPPRWFIEQEAVRQNQEIQSRATSRAITIAAKTLRDSQGFGSQPTRLSQPFVERHRQSNHLNDFLSFVEGRVNKNRPSTHLTTGLVDMFVDNFGSVMQNDEPNTSRRPDENYAPMDFDDDFGGGGDDDDDDYIRNLSRRDEKRAPAPWDELDKNHIIWYTGDENLPVVSKPVKKITKFQPKPAEMLARKQRREEKINKSRRDEFMETHDYLQDYYYWRSAARINPIKDWKIESLRTAILAEKKRRIKEKTAKIREARIQNMQRKRTARVIPVEQFEPVTEDIPTSNRRTLGAEYDDVVDEDLAAEVELSMFGGGFDDDEEDVRPRGERPPMAPNNLEFDALQTDFDIPPAEYVPLRFEDIDDAELNSVINLPGNLLIDKALPLLKKFAENRTDREQMAYEMAKAYEDVDVAVSTLQEHVDKWHSRMEPILEEGETRKEYDVHAVGRAVIGQYDIEGGTKRLLDLVMDRPWYEISRYFLSCLFMCNVGNVMVSEDMELPLEERINSMKITLLKRDMHCEMFKEAGALDA.

The segment at 389-426 (VMQNDEPNTSRRPDENYAPMDFDDDFGGGGDDDDDDYI) is disordered. The segment covering 409 to 424 (DFDDDFGGGGDDDDDD) has biased composition (acidic residues). Positions 529-561 (TAILAEKKRRIKEKTAKIREARIQNMQRKRTAR) form a coiled coil.

Belongs to the CND2 H2 (condensin-2 subunit 2) family. In terms of assembly, component of the condensin II complex, which contains the mix-1/SMC2 and smc-4/SMC4 heterodimer, and three non SMC subunits, capg-2, kle-2 and hcp-6 that probably regulate the complex. Within the complex, interacts with mix-1, smc-4, capg-2 and hcp-6.

The protein resides in the nucleus. It localises to the chromosome. Its subcellular location is the centromere. Its function is as follows. Regulatory subunit of the condensin II complex, a complex that seems to play a role in prophase chromosome condensation and in chromosome segregation in mitosis and in meiosis. The sequence is that of Condensin-2 complex subunit kle-2 (kle-2) from Caenorhabditis elegans.